Reading from the N-terminus, the 452-residue chain is UPF0761 membrane protein Bpet3042 (452 aa).

6 helical membrane passes run 56 to 76 (VLGIVPMLAVVLSLFTAFPVF), 114 to 134 (LTAIGGAFLVVTSLLLIMTID), 153 to 173 (ALVYWAVVTLGPVVAGASLWA), 195 to 215 (AISFLPLILTGLGFAALFVVV), 225 to 245 (ALVGGFGTAIVLELMKAAFAY), and 259 to 279 (AFATLPIFLLWIYLSWLAVLF).

The protein belongs to the UPF0761 family.

It localises to the cell inner membrane. In Bordetella petrii (strain ATCC BAA-461 / DSM 12804 / CCUG 43448), this protein is UPF0761 membrane protein Bpet3042.